The primary structure comprises 654 residues: Coiled-coil domain-containing protein 30 (654 aa).

The interval 38-65 (TLESRRDPNSSLQKEFPQHQDEDQSRAA) is disordered. The span at 53-62 (FPQHQDEDQS) shows a compositional bias: basic and acidic residues. 2 coiled-coil regions span residues 97-244 (REER…LDNA) and 276-559 (KSQQ…QIIR). Positions 614–654 (AAAIPKSPEPLSRSQDSESGYINVTSLKETHNTQGDQKPEL) are disordered. Positions 625–654 (SRSQDSESGYINVTSLKETHNTQGDQKPEL) are enriched in polar residues.

The protein belongs to the prefoldin subunit beta family.

In Mus musculus (Mouse), this protein is Coiled-coil domain-containing protein 30 (Ccdc30).